A 211-amino-acid polypeptide reads, in one-letter code: Troponin I, cardiac muscle (211 aa).

The tract at residues 1 to 25 is disordered; sequence MADESSDAAGEPQPAPAPVRRRSSA. The residue at position 2 (alanine 2) is an N-acetylalanine. Serine 5 and serine 6 each carry phosphoserine. Residues serine 23 and serine 24 each carry the phosphoserine; by PKA and PKD/PRKD1 modification. Phosphotyrosine is present on tyrosine 27. A Phosphothreonine; by STK4/MST1 modification is found at threonine 32. The segment at 33-80 is involved in binding TNC; sequence EPHAKKKSKISASRKLQLKTLMLQIAKQEMEREAEERRGEKGRVLSTR. Phosphoserine; by PKC/PRKCE is present on residues serine 43 and serine 45. Position 52 is a phosphothreonine; by STK4/MST1 (threonine 52). A Phosphoserine modification is found at serine 78. Position 79 is a phosphothreonine (threonine 79). Threonine 130 and threonine 144 each carry phosphothreonine; by STK4/MST1. The tract at residues 130–151 is involved in binding TNC and actin; that stretch reads TQKIYDLRGKFKRPTLRRVRIS. Serine 151 is modified (phosphoserine; by PAK3). Phosphoserine occurs at positions 167 and 200.

Belongs to the troponin I family. As to quaternary structure, interacts with TRIM63. Binds to actin and tropomyosin. Interacts with STK4/MST1. Phosphorylated at Ser-23 and Ser-24 by PRKD1; phosphorylation reduces myofilament calcium sensitivity. Phosphorylated preferentially at Thr-32. Phosphorylation by STK4/MST1 alters its binding affinity to TNNC1 (cardiac Tn-C) and TNNT2 (cardiac Tn-T). Phosphorylated at Ser-43 and Ser-45 by PRKCE; phosphorylation increases myocardium contractile dysfunction.

In terms of biological role, troponin I is the inhibitory subunit of troponin, the thin filament regulatory complex which confers calcium-sensitivity to striated muscle actomyosin ATPase activity. This Rattus norvegicus (Rat) protein is Troponin I, cardiac muscle (Tnni3).